Reading from the N-terminus, the 250-residue chain is Probable transcriptional regulatory protein Mmc1_0479 (250 aa).

The protein belongs to the TACO1 family.

It localises to the cytoplasm. The sequence is that of Probable transcriptional regulatory protein Mmc1_0479 from Magnetococcus marinus (strain ATCC BAA-1437 / JCM 17883 / MC-1).